A 513-amino-acid chain; its full sequence is Light-independent protochlorophyllide reductase subunit B (513 aa).

Asp-36 contributes to the [4Fe-4S] cluster binding site. The active-site Proton donor is the Asp-299. Gly-434 to Met-435 is a substrate binding site.

This sequence belongs to the ChlB/BchB/BchZ family. In terms of assembly, protochlorophyllide reductase is composed of three subunits; ChlL, ChlN and ChlB. Forms a heterotetramer of two ChlB and two ChlN subunits. The cofactor is [4Fe-4S] cluster.

It localises to the plastid. Its subcellular location is the chloroplast. It catalyses the reaction chlorophyllide a + oxidized 2[4Fe-4S]-[ferredoxin] + 2 ADP + 2 phosphate = protochlorophyllide a + reduced 2[4Fe-4S]-[ferredoxin] + 2 ATP + 2 H2O. It functions in the pathway porphyrin-containing compound metabolism; chlorophyll biosynthesis (light-independent). Its function is as follows. Component of the dark-operative protochlorophyllide reductase (DPOR) that uses Mg-ATP and reduced ferredoxin to reduce ring D of protochlorophyllide (Pchlide) to form chlorophyllide a (Chlide). This reaction is light-independent. The NB-protein (ChlN-ChlB) is the catalytic component of the complex. This Anthoceros angustus (Hornwort) protein is Light-independent protochlorophyllide reductase subunit B.